We begin with the raw amino-acid sequence, 300 residues long: Junctional adhesion molecule A (300 aa).

Positions 1 to 26 (MGTEGKAGRKLLFLFTSMILGSLVQG) are cleaved as a signal peptide. At 27–238 (KGSVYTAQSD…MDAVELNVGG (212 aa)) the chain is on the extracellular side. 2 consecutive Ig-like V-type domains span residues 28–122 (GSVY…GEVS) and 134–230 (PTIS…AHMD). An N-linked (GlcNAc...) asparagine glycan is attached at N42. Disulfide bonds link C49-C108 and C152-C212. N185 carries an N-linked (GlcNAc...) asparagine glycan. The chain crosses the membrane as a helical span at residues 239-259 (IVAAVLVTLILLGLLIFGVWF). Residues 260 to 299 (AYSRGYFERTKKGTAPGKKVIYSQPSTRSEGEFKQTSSFL) are Cytoplasmic-facing. S282, S285, and S288 each carry phosphoserine.

Belongs to the immunoglobulin superfamily. In terms of assembly, interacts with the ninth PDZ domain of MPDZ. Interacts with the first PDZ domain of PARD3. The association between PARD3 and PARD6B probably disrupts this interaction. Interacts with ITGAL (via I-domain). Interacts with CD151.

The protein resides in the cell junction. It is found in the tight junction. Its subcellular location is the cell membrane. Seems to play a role in epithelial tight junction formation. Appears early in primordial forms of cell junctions and recruits PARD3. The association of the PARD6-PARD3 complex may prevent the interaction of PARD3 with JAM1, thereby preventing tight junction assembly. Plays a role in regulating monocyte transmigration involved in integrity of epithelial barrier. Ligand for integrin alpha-L/beta-2 involved in memory T-cell and neutrophil transmigration. Involved in platelet activation. This chain is Junctional adhesion molecule A (F11r), found in Mus musculus (Mouse).